Reading from the N-terminus, the 89-residue chain is Large ribosomal subunit protein bL31B (89 aa).

The segment at 70 to 89 (RVQRFESRRRRRQQQSGEQG) is disordered.

The protein belongs to the bacterial ribosomal protein bL31 family. Type B subfamily. As to quaternary structure, part of the 50S ribosomal subunit.

The protein is Large ribosomal subunit protein bL31B of Rubrobacter xylanophilus (strain DSM 9941 / JCM 11954 / NBRC 16129 / PRD-1).